A 357-amino-acid chain; its full sequence is Glutamate 5-kinase (357 aa).

Residue Lys7 participates in ATP binding. 3 residues coordinate substrate: Ser43, Asp130, and Asn142. 162-163 (TD) contributes to the ATP binding site. In terms of domain architecture, PUA spans 270-347 (QGELTLDAGA…PAAGPSPVVV (78 aa)).

It belongs to the glutamate 5-kinase family.

The protein resides in the cytoplasm. It catalyses the reaction L-glutamate + ATP = L-glutamyl 5-phosphate + ADP. Its pathway is amino-acid biosynthesis; L-proline biosynthesis; L-glutamate 5-semialdehyde from L-glutamate: step 1/2. Its function is as follows. Catalyzes the transfer of a phosphate group to glutamate to form L-glutamate 5-phosphate. This chain is Glutamate 5-kinase, found in Parasynechococcus marenigrum (strain WH8102).